The primary structure comprises 220 residues: Chaperone protein TorD (220 aa).

Belongs to the TorD/DmsD family. TorD subfamily.

Its subcellular location is the cytoplasm. Involved in the biogenesis of TorA. Acts on TorA before the insertion of the molybdenum cofactor and, as a result, probably favors a conformation of the apoenzyme that is competent for acquiring the cofactor. This Vibrio cholerae serotype O1 (strain ATCC 39541 / Classical Ogawa 395 / O395) protein is Chaperone protein TorD.